Reading from the N-terminus, the 98-residue chain is NADH-ubiquinone oxidoreductase chain 4L (98 aa).

3 helical membrane passes run 1 to 21, 36 to 56, and 61 to 81; these read MVLIKLNIIMAFMLALTGVLI, MMLSLFIFMAAVITHFHMFSI, and LILLVFSACEAGVGLALLVTI.

The protein belongs to the complex I subunit 4L family. In terms of assembly, core subunit of respiratory chain NADH dehydrogenase (Complex I) which is composed of 45 different subunits.

Its subcellular location is the mitochondrion inner membrane. The catalysed reaction is a ubiquinone + NADH + 5 H(+)(in) = a ubiquinol + NAD(+) + 4 H(+)(out). Core subunit of the mitochondrial membrane respiratory chain NADH dehydrogenase (Complex I) which catalyzes electron transfer from NADH through the respiratory chain, using ubiquinone as an electron acceptor. Part of the enzyme membrane arm which is embedded in the lipid bilayer and involved in proton translocation. The protein is NADH-ubiquinone oxidoreductase chain 4L (MT-ND4L) of Metachirus nudicaudatus (Brown four-eyed opossum).